Here is a 458-residue protein sequence, read N- to C-terminus: Argininosuccinate lyase (458 aa).

Belongs to the lyase 1 family. Argininosuccinate lyase subfamily.

It is found in the cytoplasm. It carries out the reaction 2-(N(omega)-L-arginino)succinate = fumarate + L-arginine. The protein operates within amino-acid biosynthesis; L-arginine biosynthesis; L-arginine from L-ornithine and carbamoyl phosphate: step 3/3. This is Argininosuccinate lyase from Pseudoalteromonas atlantica (strain T6c / ATCC BAA-1087).